The sequence spans 162 residues: Troponin C, skeletal muscle (162 aa).

Ala1 carries the N-acetylalanine modification. 4 consecutive EF-hand domains span residues 17–52 (EMIA…LGQT), 53–88 (PTKE…QMKE), 93–128 (KSEE…SGES), and 129–162 (ITDE…EGVQ). Ca(2+)-binding residues include Asp30, Asp32, Asp36, Glu41, Asp66, Asp68, Ser70, Thr72, Glu77, Asp106, Asn108, Asp110, Tyr112, Glu117, Asp142, Asn144, Asp146, Lys148, and Glu153.

Belongs to the troponin C family.

In terms of biological role, troponin is the central regulatory protein of striated muscle contraction. Tn consists of three components: Tn-I which is the inhibitor of actomyosin ATPase, Tn-T which contains the binding site for tropomyosin and Tn-C. The binding of calcium to Tn-C abolishes the inhibitory action of Tn on actin filaments. The polypeptide is Troponin C, skeletal muscle (Pelophylax lessonae (Pool frog)).